The sequence spans 259 residues: 5'-nucleotidase SurE (259 aa).

Residues D13, D14, S44, and N101 each coordinate a divalent metal cation.

The protein belongs to the SurE nucleotidase family. A divalent metal cation serves as cofactor.

Its subcellular location is the cytoplasm. It catalyses the reaction a ribonucleoside 5'-phosphate + H2O = a ribonucleoside + phosphate. Nucleotidase that shows phosphatase activity on nucleoside 5'-monophosphates. This is 5'-nucleotidase SurE from Flavobacterium johnsoniae (strain ATCC 17061 / DSM 2064 / JCM 8514 / BCRC 14874 / CCUG 350202 / NBRC 14942 / NCIMB 11054 / UW101) (Cytophaga johnsonae).